The primary structure comprises 517 residues: MEDVLTLITMIVLLLLAFHGFGKCSSDLYSRSDFPEGFVFGAGISAYQWEGAVDEDGRKPSVWDTFLHCRKMDNGDIACDGYHKYKEDVQLMAETGLHTFRFSISWSRLISNGRGSINPKGLQFYKNFIQELVKHGIEPHVTLHHYDFPQYLEDDYGGWTNRKIIKDFTAYADVCFREFGNHVKFWTTINEANIFTIGGYNDGNSPPGRCSFPGRNCTLGNSSTETYIVGHNLLLAHASVSRLYKQKYKDIQGGSVGFSLFAMNFTPSTNSKDDEIATKRANDFYLGWMLEPLIYGDYPDVMKRTIGSRLPVFSKEESEQVKGSSDFIGVIHYLTALVTNIDINPSLSGIPDFNSDMGESINILSMRVRISRLPNSDEKCLIFFITLSILEYIKQSYGNPPVYILENGKTMNQDLELQQKDTPRIEYLDAYIGAVLKAVRNGSDTRGYFVWSFMDLYELLNGYKSSFGLYSVNFSDPHRKRSPKLSAHWYSGFLKGKPTFLGSQGITQLHSNFSSSR.

Residues 1–22 (MEDVLTLITMIVLLLLAFHGFG) form the signal peptide. A beta-D-glucoside is bound by residues Gln48, His145, and 190–191 (NE). Glu191 serves as the catalytic Proton donor. An intrachain disulfide couples Cys210 to Cys217. N-linked (GlcNAc...) asparagine glycosylation is found at Asn216 and Asn221. 2 residues coordinate a beta-D-glucoside: Tyr333 and Glu406. The active-site Nucleophile is the Glu406. An N-linked (GlcNAc...) asparagine glycan is attached at Asn441. 2 residues coordinate a beta-D-glucoside: Trp451 and Phe467. 2 N-linked (GlcNAc...) asparagine glycosylation sites follow: Asn473 and Asn512.

The protein belongs to the glycosyl hydrolase 1 family.

It carries out the reaction Hydrolysis of terminal, non-reducing beta-D-glucosyl residues with release of beta-D-glucose.. The chain is Beta-glucosidase 1 from Arabidopsis thaliana (Mouse-ear cress).